The primary structure comprises 342 residues: Holliday junction branch migration complex subunit RuvB (342 aa).

Positions 1–179 (MTNILSPEKS…FGIPMRLNFY (179 aa)) are large ATPase domain (RuvB-L). Residues Ile18, Arg19, Gly60, Lys63, Thr64, Thr65, 126-128 (EDF), Arg169, Tyr179, and Arg216 each bind ATP. Mg(2+) is bound at residue Thr64. A small ATPAse domain (RuvB-S) region spans residues 180–250 (NTGELKKVLN…ISDFGLNRLE (71 aa)). The segment at 253–342 (RIGLDSNDYR…HQFNIFNENE (90 aa)) is head domain (RuvB-H). Residues Arg289, Arg308, and Arg313 each coordinate DNA.

This sequence belongs to the RuvB family. As to quaternary structure, homohexamer. Forms an RuvA(8)-RuvB(12)-Holliday junction (HJ) complex. HJ DNA is sandwiched between 2 RuvA tetramers; dsDNA enters through RuvA and exits via RuvB. An RuvB hexamer assembles on each DNA strand where it exits the tetramer. Each RuvB hexamer is contacted by two RuvA subunits (via domain III) on 2 adjacent RuvB subunits; this complex drives branch migration. In the full resolvosome a probable DNA-RuvA(4)-RuvB(12)-RuvC(2) complex forms which resolves the HJ.

The protein resides in the cytoplasm. The catalysed reaction is ATP + H2O = ADP + phosphate + H(+). Its function is as follows. The RuvA-RuvB-RuvC complex processes Holliday junction (HJ) DNA during genetic recombination and DNA repair, while the RuvA-RuvB complex plays an important role in the rescue of blocked DNA replication forks via replication fork reversal (RFR). RuvA specifically binds to HJ cruciform DNA, conferring on it an open structure. The RuvB hexamer acts as an ATP-dependent pump, pulling dsDNA into and through the RuvAB complex. RuvB forms 2 homohexamers on either side of HJ DNA bound by 1 or 2 RuvA tetramers; 4 subunits per hexamer contact DNA at a time. Coordinated motions by a converter formed by DNA-disengaged RuvB subunits stimulates ATP hydrolysis and nucleotide exchange. Immobilization of the converter enables RuvB to convert the ATP-contained energy into a lever motion, pulling 2 nucleotides of DNA out of the RuvA tetramer per ATP hydrolyzed, thus driving DNA branch migration. The RuvB motors rotate together with the DNA substrate, which together with the progressing nucleotide cycle form the mechanistic basis for DNA recombination by continuous HJ branch migration. Branch migration allows RuvC to scan DNA until it finds its consensus sequence, where it cleaves and resolves cruciform DNA. In Rickettsia conorii (strain ATCC VR-613 / Malish 7), this protein is Holliday junction branch migration complex subunit RuvB.